A 434-amino-acid polypeptide reads, in one-letter code: UDP-N-acetylenolpyruvoylglucosamine reductase (434 aa).

Positions 51–238 (IGAAPAGVVE…TAVEFQLTTD (188 aa)) constitute an FAD-binding PCMH-type domain. R216 is a catalytic residue. The active-site Proton donor is S299. Residue E425 is part of the active site.

Belongs to the MurB family. Requires FAD as cofactor.

The protein resides in the cytoplasm. The catalysed reaction is UDP-N-acetyl-alpha-D-muramate + NADP(+) = UDP-N-acetyl-3-O-(1-carboxyvinyl)-alpha-D-glucosamine + NADPH + H(+). It participates in cell wall biogenesis; peptidoglycan biosynthesis. Cell wall formation. This chain is UDP-N-acetylenolpyruvoylglucosamine reductase, found in Corynebacterium jeikeium (strain K411).